A 561-amino-acid chain; its full sequence is Sesquiterpene synthase 1 (561 aa).

Mg(2+) is bound by residues D313, D317, D458, and E466. The DDXXD motif signature appears at 313 to 317 (DDIYD).

The protein belongs to the terpene synthase family. Tpsa subfamily. It depends on Mn(2+) as a cofactor. Mg(2+) serves as cofactor.

It is found in the cytoplasm. It catalyses the reaction (2E,6E)-farnesyl diphosphate = (1S,8aR)-delta-cadinene + diphosphate. It participates in secondary metabolite biosynthesis; terpenoid biosynthesis. In terms of biological role, involved in the biosynthesis of delta-cadinene. The chain is Sesquiterpene synthase 1 (STS1) from Thapsia garganica (Deadly carrot).